The chain runs to 235 residues: MHIMEGFLPAGWCLVWWLIALPFLVMGIIQLRRMMKEDREYLPLLGVCGAFIFILSALKLPSVTGSCSHPTGTGLSTICFGYCVTAVVGAIVLLFQALLLAHGGLSTMGANMVSMAIGGPIAGYAVYKLMKDTSINIYVTVFLASAVADIVTYIITSFELALAYPAQVGGFLASFSAFFSIFAITQIPLSIMEGVVLALVFKYIIQLKPEIILKLHVFSEEQIAKARLAGDAEVA.

Transmembrane regions (helical) follow at residues 9-29 (PAGW…MGII), 41-61 (YLPL…LKLP), 80-100 (FGYC…ALLL), 107-127 (TMGA…YAVY), 135-155 (INIY…TYII), 160-180 (LALA…AFFS), and 181-201 (IFAI…ALVF).

The protein belongs to the CbiM family. As to quaternary structure, forms an energy-coupling factor (ECF) transporter complex composed of an ATP-binding protein (A component, CbiO), a transmembrane protein (T component, CbiQ) and 2 possible substrate-capture proteins (S components, CbiM and CbiN) of unknown stoichimetry.

It is found in the cell membrane. It functions in the pathway cofactor biosynthesis; adenosylcobalamin biosynthesis. Its function is as follows. Part of the energy-coupling factor (ECF) transporter complex CbiMNOQ involved in cobalt import. In Methanosphaerula palustris (strain ATCC BAA-1556 / DSM 19958 / E1-9c), this protein is Putative cobalt transport protein CbiM 2.